We begin with the raw amino-acid sequence, 469 residues long: RuvB-like helicase 2 (469 aa).

76-83 (GPPSTGKT) lines the ATP pocket.

This sequence belongs to the RuvB family. May form heterododecamers with RVB1. Component of the SWR1 chromatin remodeling complex, the INO80 chromatin remodeling complex, and of the R2TP complex.

The protein resides in the nucleus. It catalyses the reaction ATP + H2O = ADP + phosphate + H(+). DNA helicase which participates in several chromatin remodeling complexes, including the SWR1 and the INO80 complexes. The SWR1 complex mediates the ATP-dependent exchange of histone H2A for the H2A variant HZT1 leading to transcriptional regulation of selected genes by chromatin remodeling. The INO80 complex remodels chromatin by shifting nucleosomes and is involved in DNA repair. Also involved in pre-rRNA processing. This chain is RuvB-like helicase 2 (rvb2), found in Aspergillus fumigatus (strain ATCC MYA-4609 / CBS 101355 / FGSC A1100 / Af293) (Neosartorya fumigata).